The primary structure comprises 301 residues: Tyrosine recombinase XerD (301 aa).

The Core-binding (CB) domain maps to 7–90 (QFHTTILEQF…ALKVFFLFLK (84 aa)). The region spanning 109–294 (RLPSVLTPQE…AADSLIEKFL (186 aa)) is the Tyr recombinase domain. Residues arginine 153, lysine 175, histidine 246, arginine 249, and histidine 272 contribute to the active site. The active-site O-(3'-phospho-DNA)-tyrosine intermediate is tyrosine 281.

Belongs to the 'phage' integrase family. XerD subfamily. In terms of assembly, forms a cyclic heterotetrameric complex composed of two molecules of XerC and two molecules of XerD.

It localises to the cytoplasm. Its function is as follows. Site-specific tyrosine recombinase, which acts by catalyzing the cutting and rejoining of the recombining DNA molecules. The XerC-XerD complex is essential to convert dimers of the bacterial chromosome into monomers to permit their segregation at cell division. It also contributes to the segregational stability of plasmids. This chain is Tyrosine recombinase XerD, found in Chlamydia pneumoniae (Chlamydophila pneumoniae).